The primary structure comprises 146 residues: Small ribosomal subunit protein uS5 (146 aa).

The 64-residue stretch at 8 to 71 (FKEVVVNIGR…DDAFKNIIKV (64 aa)) folds into the S5 DRBM domain.

This sequence belongs to the universal ribosomal protein uS5 family. In terms of assembly, part of the 30S ribosomal subunit. Contacts proteins S4 and S8.

Functionally, with S4 and S12 plays an important role in translational accuracy. Located at the back of the 30S subunit body where it stabilizes the conformation of the head with respect to the body. In Wolinella succinogenes (strain ATCC 29543 / DSM 1740 / CCUG 13145 / JCM 31913 / LMG 7466 / NCTC 11488 / FDC 602W) (Vibrio succinogenes), this protein is Small ribosomal subunit protein uS5.